The chain runs to 130 residues: Ribosome-binding factor A (130 aa).

A disordered region spans residues 111-130; the sequence is RDLDDVGPEATSSDEDAEQR.

Belongs to the RbfA family. As to quaternary structure, monomer. Binds 30S ribosomal subunits, but not 50S ribosomal subunits or 70S ribosomes.

It is found in the cytoplasm. One of several proteins that assist in the late maturation steps of the functional core of the 30S ribosomal subunit. Associates with free 30S ribosomal subunits (but not with 30S subunits that are part of 70S ribosomes or polysomes). Required for efficient processing of 16S rRNA. May interact with the 5'-terminal helix region of 16S rRNA. This is Ribosome-binding factor A from Xanthomonas axonopodis pv. citri (strain 306).